A 297-amino-acid polypeptide reads, in one-letter code: Nicotinate-nucleotide pyrophosphorylase [carboxylating] (297 aa).

The interval 8–12 (LLLPP) is important for hexamer formation. Residues Arg-102, 138–139 (RK), 160–161 (HR), Lys-171, Glu-201, Asp-222, 248–250 (SGG), and Gly-270 contribute to the quinolinate site.

It belongs to the NadC/ModD family. Hexamer formed by 3 homodimers.

It catalyses the reaction nicotinate beta-D-ribonucleotide + CO2 + diphosphate = quinolinate + 5-phospho-alpha-D-ribose 1-diphosphate + 2 H(+). The protein operates within cofactor biosynthesis; NAD(+) biosynthesis; nicotinate D-ribonucleotide from quinolinate: step 1/1. With respect to regulation, activity toward QA is slightly repressed by phosphoribosylpyrophosphate (PRPP) in both a competitive and a non-competitive manner. Competitively inhibited by phthalic acid (PHT). Its function is as follows. Involved in the catabolism of quinolinic acid (QA). In Homo sapiens (Human), this protein is Nicotinate-nucleotide pyrophosphorylase [carboxylating] (QPRT).